The chain runs to 300 residues: Ribosomal protein L11 methyltransferase (300 aa).

S-adenosyl-L-methionine is bound by residues Thr152, Gly173, Asp195, and Asn234.

Belongs to the methyltransferase superfamily. PrmA family.

The protein localises to the cytoplasm. It carries out the reaction L-lysyl-[protein] + 3 S-adenosyl-L-methionine = N(6),N(6),N(6)-trimethyl-L-lysyl-[protein] + 3 S-adenosyl-L-homocysteine + 3 H(+). Functionally, methylates ribosomal protein L11. The protein is Ribosomal protein L11 methyltransferase of Paraburkholderia xenovorans (strain LB400).